Consider the following 301-residue polypeptide: UBX domain-containing protein 2 (301 aa).

Positions Met-1–His-61 are disordered. Residues Thr-89–Val-153 enclose the SEP domain. The disordered stretch occupies residues Gly-176–Ala-200. Residues Ser-178 to Thr-192 are compositionally biased toward low complexity. The region spanning Met-218–Lys-295 is the UBX domain.

It belongs to the NSFL1C family. As to quaternary structure, interacts with cdc-48.1 (via N-terminus) and cdc-48.2 (via N-terminus). Interacts with kinase air-1. Expressed in the germline (at protein level). Expressed in spermatocytes but not in mature sperm (at protein level). Ubiquitously expressed. Predominantly expressed in the spermatheca.

The protein resides in the cytoplasm. Its subcellular location is the perinuclear region. It localises to the nucleus. It is found in the cytoskeleton. The protein localises to the microtubule organizing center. The protein resides in the centrosome. Ubiquitin-binding protein which acts as an adapter for ATPase cdc-48.1 and/or cdc-48.2, conferring substrate specificity. Together with ubxn-2 and ubxn-3, plays a role in hermaphrodite spermatogenesis probably by promoting the degradation of sex determination terminal factor tra-1. Probably in association with ATPase cdc-48.1 or/and cdc-48.2, regulates the centrosomal levels of kinase air-1 levels during mitotic progression by promoting air-1 removal from centrosomes in prophase. Also, regulates spindle orientation in the one-cell embryo by controlling centration and rotation of the pronuclei-centrosome complex in prophase. This chain is UBX domain-containing protein 2, found in Caenorhabditis elegans.